A 116-amino-acid chain; its full sequence is Large ribosomal subunit protein bL17 (116 aa).

It belongs to the bacterial ribosomal protein bL17 family. As to quaternary structure, part of the 50S ribosomal subunit. Contacts proteins L3 and L32.

Binds to the 23S rRNA. This is Large ribosomal subunit protein bL17 from Deinococcus radiodurans (strain ATCC 13939 / DSM 20539 / JCM 16871 / CCUG 27074 / LMG 4051 / NBRC 15346 / NCIMB 9279 / VKM B-1422 / R1).